A 490-amino-acid chain; its full sequence is Interferon-induced protein with tetratricopeptide repeats 3 (490 aa).

8 TPR repeats span residues 51 to 84 (ATMY…IQQE), 94 to 127 (LVTW…CKKF), 136 to 169 (SELD…KPNN), 172 to 206 (FSSG…SPDN), 207 to 240 (QYVK…SPCQ), 241 to 274 (TDVL…TPNN), 415 to 448 (PNYW…LLRD), and 450 to 481 (PSGI…SPRE). 2 positions are modified to phosphoserine: S203 and S237. Positions 467-490 (SEEMGQGAVSSSPRELLSNSEQLN) are disordered. Residues 474–490 (AVSSSPRELLSNSEQLN) show a composition bias toward polar residues. S478 is subject to Phosphoserine.

Belongs to the IFIT family. Component of an interferon-dependent multiprotein complex, at least composed of IFIT1, IFIT2 and IFIT3. Interacts with IFIT1 and IFIT2. Interacts (via N-terminus) with MAVS, TBK1, TRAF6 and RIGI. Interacts with COPS5. In terms of tissue distribution, expression significantly higher in peripheral blood mononuclear cells (PBMCs) and monocytes from systemic lupus erythematosus (SLE) patients than in those from healthy individuals (at protein level). Spleen, lung, leukocytes, lymph nodes, placenta, bone marrow and fetal liver.

The protein localises to the cytoplasm. Its subcellular location is the mitochondrion. IFN-induced antiviral protein which acts as an inhibitor of cellular as well as viral processes, cell migration, proliferation, signaling, and viral replication. Enhances MAVS-mediated host antiviral responses by serving as an adapter bridging TBK1 to MAVS which leads to the activation of TBK1 and phosphorylation of IRF3 and phosphorylated IRF3 translocates into nucleus to promote antiviral gene transcription. Exhibits an antiproliferative activity via the up-regulation of cell cycle negative regulators CDKN1A/p21 and CDKN1B/p27. Normally, CDKN1B/p27 turnover is regulated by COPS5, which binds CDKN1B/p27 in the nucleus and exports it to the cytoplasm for ubiquitin-dependent degradation. IFIT3 sequesters COPS5 in the cytoplasm, thereby increasing nuclear CDKN1B/p27 protein levels. Up-regulates CDKN1A/p21 by down-regulating MYC, a repressor of CDKN1A/p21. Can negatively regulate the apoptotic effects of IFIT2. The chain is Interferon-induced protein with tetratricopeptide repeats 3 (IFIT3) from Homo sapiens (Human).